A 334-amino-acid chain; its full sequence is L-lactate dehydrogenase A chain (334 aa).

NAD(+)-binding positions include 30–58 (GQVGMACAVSVLLKELADELALVDILEDK) and arginine 100. 3 residues coordinate substrate: arginine 107, asparagine 139, and arginine 170. Asparagine 139 is a binding site for NAD(+). The active-site Proton acceptor is the histidine 194. Residue threonine 249 participates in substrate binding.

It belongs to the LDH/MDH superfamily. LDH family. As to quaternary structure, homotetramer.

The protein resides in the cytoplasm. It carries out the reaction (S)-lactate + NAD(+) = pyruvate + NADH + H(+). Its pathway is fermentation; pyruvate fermentation to lactate; (S)-lactate from pyruvate: step 1/1. Its function is as follows. Interconverts simultaneously and stereospecifically pyruvate and lactate with concomitant interconversion of NADH and NAD(+). The chain is L-lactate dehydrogenase A chain (ldha) from Xenopus laevis (African clawed frog).